Consider the following 70-residue polypeptide: Probable protein transport protein Sec61 subunit gamma (70 aa).

Residues 1–33 (MADNADDLFQIPKNFYKEGSHFIKRCVKPDRKE) are Cytoplasmic-facing. A helical transmembrane segment spans residues 34 to 62 (FLSISKAVATGFVLMGLIGYIIKLIHIPI). Residues 63–70 (NKVLVGGA) are Extracellular-facing.

The protein belongs to the SecE/SEC61-gamma family. Heterotrimeric complex composed of SEC61-alpha, SEC61-beta and SEC61-gamma.

The protein resides in the endoplasmic reticulum membrane. In terms of biological role, necessary for protein translocation in the endoplasmic reticulum. This Schizosaccharomyces pombe (strain 972 / ATCC 24843) (Fission yeast) protein is Probable protein transport protein Sec61 subunit gamma (sss1).